The sequence spans 685 residues: Serine/threonine-protein kinase PLK2 (685 aa).

Positions 24–71 are disordered; that stretch reads KGCGADSKKKRPPQPPEESQPPQSQAQVPPAAAHHHHHHSHSGPEISR. The span at 43–55 shows a compositional bias: low complexity; the sequence is QPPQSQAQVPPAA. The region spanning 82 to 334 is the Protein kinase domain; the sequence is YCRGKVLGKG…LDDIIRHDFF (253 aa). ATP is bound by residues 88–96 and K111; that span reads LGKGGFAKC. Catalysis depends on D205, which acts as the Proton acceptor. Position 239 is a phosphothreonine (T239). The interval 406-433 is disordered; sequence SITQQPSKHRTDEELQPPTTTVARSGTP. POLO box domains are found at residues 503–581 and 601–685; these read WVTK…YMEE and YLLQ…QRCN.

It belongs to the protein kinase superfamily. Ser/Thr protein kinase family. CDC5/Polo subfamily. As to quaternary structure, interacts with NSF; causing NSF dissociation from GRIA2. Interacts with CIB1. In terms of processing, catalytic activity is enhanced by phosphorylation of Thr-239.

The protein localises to the cytoplasm. It localises to the cytoskeleton. Its subcellular location is the microtubule organizing center. It is found in the centrosome. The protein resides in the centriole. The protein localises to the cell projection. It localises to the dendrite. The enzyme catalyses L-seryl-[protein] + ATP = O-phospho-L-seryl-[protein] + ADP + H(+). It carries out the reaction L-threonyl-[protein] + ATP = O-phospho-L-threonyl-[protein] + ADP + H(+). With respect to regulation, activated by phosphorylation of Thr-239. Once activated, activity is stimulated by binding target proteins. Tumor suppressor serine/threonine-protein kinase involved in synaptic plasticity, centriole duplication and G1/S phase transition. Polo-like kinases act by binding and phosphorylating proteins that are already phosphorylated on a specific motif recognized by the POLO box domains. Phosphorylates CPAP, NPM1, RAPGEF2, RASGRF1, SNCA, SIPA1L1 and SYNGAP1. Plays a key role in synaptic plasticity and memory by regulating the Ras and Rap protein signaling: required for overactivity-dependent spine remodeling by phosphorylating the Ras activator RASGRF1 and the Rap inhibitor SIPA1L1 leading to their degradation by the proteasome. Conversely, phosphorylates the Rap activator RAPGEF2 and the Ras inhibitor SYNGAP1, promoting their activity. Also regulates synaptic plasticity independently of kinase activity, via its interaction with NSF that disrupts the interaction between NSF and the GRIA2 subunit of AMPARs, leading to a rapid rundown of AMPAR-mediated current that occludes long term depression. Required for procentriole formation and centriole duplication by phosphorylating CPAP and NPM1, respectively. Its induction by p53/TP53 suggests that it may participate in the mitotic checkpoint following stress. This Pongo abelii (Sumatran orangutan) protein is Serine/threonine-protein kinase PLK2 (PLK2).